The sequence spans 404 residues: Probable tRNA sulfurtransferase (404 aa).

In terms of domain architecture, THUMP spans threonine 60–threonine 165. Residues methionine 183–leucine 184, histidine 208–phenylalanine 209, arginine 265, glycine 287, and glutamine 296 contribute to the ATP site.

It belongs to the ThiI family.

It localises to the cytoplasm. The catalysed reaction is [ThiI sulfur-carrier protein]-S-sulfanyl-L-cysteine + a uridine in tRNA + 2 reduced [2Fe-2S]-[ferredoxin] + ATP + H(+) = [ThiI sulfur-carrier protein]-L-cysteine + a 4-thiouridine in tRNA + 2 oxidized [2Fe-2S]-[ferredoxin] + AMP + diphosphate. It catalyses the reaction [ThiS sulfur-carrier protein]-C-terminal Gly-Gly-AMP + S-sulfanyl-L-cysteinyl-[cysteine desulfurase] + AH2 = [ThiS sulfur-carrier protein]-C-terminal-Gly-aminoethanethioate + L-cysteinyl-[cysteine desulfurase] + A + AMP + 2 H(+). It functions in the pathway cofactor biosynthesis; thiamine diphosphate biosynthesis. Functionally, catalyzes the ATP-dependent transfer of a sulfur to tRNA to produce 4-thiouridine in position 8 of tRNAs, which functions as a near-UV photosensor. Also catalyzes the transfer of sulfur to the sulfur carrier protein ThiS, forming ThiS-thiocarboxylate. This is a step in the synthesis of thiazole, in the thiamine biosynthesis pathway. The sulfur is donated as persulfide by IscS. In Streptococcus pneumoniae (strain ATCC 700669 / Spain 23F-1), this protein is Probable tRNA sulfurtransferase.